The primary structure comprises 390 residues: uncharacterized protein (390 aa).

It belongs to the glycosyltransferase group 1 family. Glycosyltransferase 4 subfamily.

This is an uncharacterized protein from Methanocaldococcus jannaschii (strain ATCC 43067 / DSM 2661 / JAL-1 / JCM 10045 / NBRC 100440) (Methanococcus jannaschii).